The primary structure comprises 241 residues: Pyridoxine/pyridoxamine 5'-phosphate oxidase (241 aa).

The interval M1–Y35 is disordered. Substrate contacts are provided by residues R32–Y35 and K92. FMN is bound by residues R87–K92, Y102–T103, R108, K109, and Q131. Substrate contacts are provided by Y149, R153, and S157. Residues Q166–S167 and W212 contribute to the FMN site. R218–H220 is a binding site for substrate. R222 serves as a coordination point for FMN.

This sequence belongs to the pyridoxamine 5'-phosphate oxidase family. As to quaternary structure, homodimer. It depends on FMN as a cofactor.

The enzyme catalyses pyridoxamine 5'-phosphate + O2 + H2O = pyridoxal 5'-phosphate + H2O2 + NH4(+). It carries out the reaction pyridoxine 5'-phosphate + O2 = pyridoxal 5'-phosphate + H2O2. It functions in the pathway cofactor metabolism; pyridoxal 5'-phosphate salvage; pyridoxal 5'-phosphate from pyridoxamine 5'-phosphate: step 1/1. Its pathway is cofactor metabolism; pyridoxal 5'-phosphate salvage; pyridoxal 5'-phosphate from pyridoxine 5'-phosphate: step 1/1. In terms of biological role, catalyzes the oxidation of either pyridoxine 5'-phosphate (PNP) or pyridoxamine 5'-phosphate (PMP) into pyridoxal 5'-phosphate (PLP). The protein is Pyridoxine/pyridoxamine 5'-phosphate oxidase of Frankia alni (strain DSM 45986 / CECT 9034 / ACN14a).